Reading from the N-terminus, the 239-residue chain is UDP-2,3-diacylglucosamine hydrolase (239 aa).

Mn(2+) is bound by residues Asp-8, His-10, Asp-41, Asn-78, and His-113. 78–79 (NR) serves as a coordination point for substrate. The substrate site is built by Asp-121, Ser-159, Asn-163, Lys-166, and His-194. His-194 and His-196 together coordinate Mn(2+).

This sequence belongs to the LpxH family. Mn(2+) serves as cofactor.

It localises to the cell inner membrane. The catalysed reaction is UDP-2-N,3-O-bis[(3R)-3-hydroxytetradecanoyl]-alpha-D-glucosamine + H2O = 2-N,3-O-bis[(3R)-3-hydroxytetradecanoyl]-alpha-D-glucosaminyl 1-phosphate + UMP + 2 H(+). Its pathway is glycolipid biosynthesis; lipid IV(A) biosynthesis; lipid IV(A) from (3R)-3-hydroxytetradecanoyl-[acyl-carrier-protein] and UDP-N-acetyl-alpha-D-glucosamine: step 4/6. Functionally, hydrolyzes the pyrophosphate bond of UDP-2,3-diacylglucosamine to yield 2,3-diacylglucosamine 1-phosphate (lipid X) and UMP by catalyzing the attack of water at the alpha-P atom. Involved in the biosynthesis of lipid A, a phosphorylated glycolipid that anchors the lipopolysaccharide to the outer membrane of the cell. This chain is UDP-2,3-diacylglucosamine hydrolase, found in Shewanella oneidensis (strain ATCC 700550 / JCM 31522 / CIP 106686 / LMG 19005 / NCIMB 14063 / MR-1).